The following is a 734-amino-acid chain: Photosystem I P700 chlorophyll a apoprotein A2 (734 aa).

8 helical membrane-spanning segments follow: residues I46–A69, L135–Q158, L175–I199, I273–Y291, I330–Y353, A369–I395, A417–H439, and F517–V535. Positions 559 and 568 each coordinate [4Fe-4S] cluster. Transmembrane regions (helical) follow at residues A575–W596 and L643–I665. Residues H654, M662, and Y670 each coordinate chlorophyll a. W671 provides a ligand contact to phylloquinone. A helical membrane pass occupies residues L707–A727.

It belongs to the PsaA/PsaB family. The PsaA/B heterodimer binds the P700 chlorophyll special pair and subsequent electron acceptors. PSI consists of a core antenna complex that captures photons, and an electron transfer chain that converts photonic excitation into a charge separation. The eukaryotic PSI reaction center is composed of at least 11 subunits. The cofactor is P700 is a chlorophyll a/chlorophyll a' dimer, A0 is one or more chlorophyll a, A1 is one or both phylloquinones and FX is a shared 4Fe-4S iron-sulfur center..

Its subcellular location is the plastid. It is found in the chloroplast thylakoid membrane. The enzyme catalyses reduced [plastocyanin] + hnu + oxidized [2Fe-2S]-[ferredoxin] = oxidized [plastocyanin] + reduced [2Fe-2S]-[ferredoxin]. PsaA and PsaB bind P700, the primary electron donor of photosystem I (PSI), as well as the electron acceptors A0, A1 and FX. PSI is a plastocyanin-ferredoxin oxidoreductase, converting photonic excitation into a charge separation, which transfers an electron from the donor P700 chlorophyll pair to the spectroscopically characterized acceptors A0, A1, FX, FA and FB in turn. Oxidized P700 is reduced on the lumenal side of the thylakoid membrane by plastocyanin. In Drimys granadensis, this protein is Photosystem I P700 chlorophyll a apoprotein A2.